A 105-amino-acid polypeptide reads, in one-letter code: Met repressor (105 aa).

The protein belongs to the MetJ family. Homodimer.

It is found in the cytoplasm. This regulatory protein, when combined with SAM (S-adenosylmethionine) represses the expression of the methionine regulon and of enzymes involved in SAM synthesis. This is Met repressor from Haemophilus influenzae (strain 86-028NP).